The chain runs to 410 residues: Cysteine desulfurase IscS (410 aa).

Pyridoxal 5'-phosphate-binding positions include 80-81 (AT), asparagine 160, glutamine 188, and 208-210 (SGH). Residue lysine 211 is modified to N6-(pyridoxal phosphate)lysine. Threonine 248 lines the pyridoxal 5'-phosphate pocket. Residue cysteine 334 is the Cysteine persulfide intermediate of the active site. Residue cysteine 334 coordinates [2Fe-2S] cluster.

The protein belongs to the class-V pyridoxal-phosphate-dependent aminotransferase family. NifS/IscS subfamily. As to quaternary structure, homodimer. Forms a heterotetramer with IscU, interacts with other sulfur acceptors. It depends on pyridoxal 5'-phosphate as a cofactor.

The protein localises to the cytoplasm. The enzyme catalyses (sulfur carrier)-H + L-cysteine = (sulfur carrier)-SH + L-alanine. It participates in cofactor biosynthesis; iron-sulfur cluster biosynthesis. Its function is as follows. Master enzyme that delivers sulfur to a number of partners involved in Fe-S cluster assembly, tRNA modification or cofactor biosynthesis. Catalyzes the removal of elemental sulfur atoms from cysteine to produce alanine. Functions as a sulfur delivery protein for Fe-S cluster synthesis onto IscU, an Fe-S scaffold assembly protein, as well as other S acceptor proteins. This Rickettsia africae (strain ESF-5) protein is Cysteine desulfurase IscS.